The following is a 186-amino-acid chain: Ribonuclease HII (186 aa).

The 185-residue stretch at 2-186 (KILAGVDEVG…KTFSPISDLL (185 aa)) folds into the RNase H type-2 domain. Residues aspartate 8, glutamate 9, and aspartate 99 each coordinate a divalent metal cation.

The protein belongs to the RNase HII family. It depends on Mn(2+) as a cofactor. Mg(2+) serves as cofactor.

The protein resides in the cytoplasm. The catalysed reaction is Endonucleolytic cleavage to 5'-phosphomonoester.. In terms of biological role, endonuclease that specifically degrades the RNA of RNA-DNA hybrids. The protein is Ribonuclease HII of Pelagibacter ubique (strain HTCC1062).